The chain runs to 443 residues: C4-dicarboxylate transport protein (443 aa).

9 helical membrane passes run 10-30 (SLYF…HFYP), 46-66 (LIKM…IAGM), 78-98 (YALL…LIVV), 143-163 (IVGA…VIFG), 199-219 (PIGA…GSLV), 224-244 (LMIC…GGIC), 291-311 (VVGL…SIYL), 332-352 (ITLL…TGSG), and 354-374 (IVLA…LALI).

This sequence belongs to the dicarboxylate/amino acid:cation symporter (DAACS) (TC 2.A.23) family.

It localises to the cell inner membrane. Its function is as follows. Responsible for the transport of dicarboxylates such as succinate, fumarate, and malate from the periplasm across the membrane. The polypeptide is C4-dicarboxylate transport protein (Pseudomonas fluorescens (strain SBW25)).